The following is a 577-amino-acid chain: Zinc finger protein 384 (577 aa).

The tract at residues 171–225 (TLTEEGGGGGGGGGSVAPKPPRGRKKKRMLESGLPEMNDPYVLSPEDDDDHQKDG) is disordered. The span at 175-185 (EGGGGGGGGGS) shows a compositional bias: gly residues. A Phosphoserine modification is found at Ser214. 8 consecutive C2H2-type zinc fingers follow at residues 228 to 250 (YRCR…SKSH), 256 to 278 (HKCP…IRIH), 284 to 306 (YSCN…TRIH), 317 to 339 (HKCP…LRIH), 345 to 367 (YNCS…TRIH), 373 to 397 (YKCA…RRQH), 403 to 425 (FKCH…LSTH), and 433 to 455 (YTCT…MRKH). The span at 501-515 (QQQQQQQQQQQQQQQ) shows a compositional bias: low complexity. The tract at residues 501-550 (QQQQQQQQQQQQQQQQPPPHFQSPGAAPQGGGGGDSNPNPPPQCSFDLTP) is disordered.

Belongs to the krueppel C2H2-type zinc-finger protein family. As to quaternary structure, interacts with BCAR1.

It localises to the nucleus. Functionally, transcription factor that binds the consensus DNA sequence [GC]AAAAA. Seems to bind and regulate the promoters of MMP1, MMP3, MMP7 and COL1A1. The protein is Zinc finger protein 384 (ZNF384) of Homo sapiens (Human).